A 255-amino-acid chain; its full sequence is HTH-type transcriptional regulator SkgA (255 aa).

One can recognise an HTH merR-type domain in the interval 3–72; sequence VYTVKQMARL…LKDIQAALDQ (70 aa). Positions 6-25 form a DNA-binding region, H-T-H motif; sequence VKQMARLSGVSVRALHHYDA.

Functionally, regulates the induction of katG (catalase-peroxidase) in stationary phase. The protein is HTH-type transcriptional regulator SkgA (skgA) of Caulobacter vibrioides (strain ATCC 19089 / CIP 103742 / CB 15) (Caulobacter crescentus).